The following is a 463-amino-acid chain: L-seryl-tRNA(Sec) selenium transferase (463 aa).

At lysine 295 the chain carries N6-(pyridoxal phosphate)lysine.

This sequence belongs to the SelA family. Homodecamer; pentamer of dimers. Binds only one seryl-tRNA(Sec) per dimer. The cofactor is pyridoxal 5'-phosphate.

The protein localises to the cytoplasm. The enzyme catalyses L-seryl-tRNA(Sec) + selenophosphate + H(+) = L-selenocysteinyl-tRNA(Sec) + phosphate. It participates in aminoacyl-tRNA biosynthesis; selenocysteinyl-tRNA(Sec) biosynthesis; selenocysteinyl-tRNA(Sec) from L-seryl-tRNA(Sec) (bacterial route): step 1/1. Its function is as follows. Converts seryl-tRNA(Sec) to selenocysteinyl-tRNA(Sec) required for selenoprotein biosynthesis. This is L-seryl-tRNA(Sec) selenium transferase from Escherichia coli O139:H28 (strain E24377A / ETEC).